The primary structure comprises 61 residues: Conotoxin LiC32 (61 aa).

Residues 1–22 (MRCVPVFIILLLLSPSAPSVDA) form the signal peptide. Positions 23 to 44 (HPKTKDDVPLASFHDDAKRTLQ) are excised as a propeptide. Cysteine 60 carries the post-translational modification Cysteine amide.

Belongs to the conotoxin T superfamily. Contains 2 disulfide bonds that can be either 'C1-C3, C2-C4' or 'C1-C4, C2-C3', since these disulfide connectivities have been observed for conotoxins with cysteine framework V (for examples, see AC P0DQQ7 and AC P81755). In terms of tissue distribution, expressed by the venom duct.

It localises to the secreted. In terms of biological role, has the ability to interact with the G-protein coupled somatostatin type 3 receptor (SSTR3). The ability was measured in competition binding experiments and the constant of inhibition (Ki) has been evaluated to be 3.5 uM. The protein is Conotoxin LiC32 of Conus lividus (Livid cone).